A 103-amino-acid polypeptide reads, in one-letter code: Small ribosomal subunit protein uS10 (103 aa).

It belongs to the universal ribosomal protein uS10 family. Part of the 30S ribosomal subunit.

Its function is as follows. Involved in the binding of tRNA to the ribosomes. This Pseudomonas savastanoi pv. phaseolicola (strain 1448A / Race 6) (Pseudomonas syringae pv. phaseolicola (strain 1448A / Race 6)) protein is Small ribosomal subunit protein uS10.